The chain runs to 226 residues: Translation initiation factor IF-3 (226 aa).

The tract at residues 195–226 (FVPLAPLSPEDLIEEPELESESDSDAEPESDN) is disordered. Residues 205–226 (DLIEEPELESESDSDAEPESDN) are compositionally biased toward acidic residues.

The protein belongs to the IF-3 family. Monomer.

The protein resides in the cytoplasm. In terms of biological role, IF-3 binds to the 30S ribosomal subunit and shifts the equilibrium between 70S ribosomes and their 50S and 30S subunits in favor of the free subunits, thus enhancing the availability of 30S subunits on which protein synthesis initiation begins. This chain is Translation initiation factor IF-3, found in Chlorobium chlorochromatii (strain CaD3).